The sequence spans 168 residues: Crossover junction endodeoxyribonuclease RuvC (168 aa).

Catalysis depends on residues Asp9, Glu70, and Asp145. Positions 9, 70, and 145 each coordinate Mg(2+).

This sequence belongs to the RuvC family. In terms of assembly, homodimer which binds Holliday junction (HJ) DNA. The HJ becomes 2-fold symmetrical on binding to RuvC with unstacked arms; it has a different conformation from HJ DNA in complex with RuvA. In the full resolvosome a probable DNA-RuvA(4)-RuvB(12)-RuvC(2) complex forms which resolves the HJ. Mg(2+) is required as a cofactor.

The protein resides in the cytoplasm. The catalysed reaction is Endonucleolytic cleavage at a junction such as a reciprocal single-stranded crossover between two homologous DNA duplexes (Holliday junction).. Its function is as follows. The RuvA-RuvB-RuvC complex processes Holliday junction (HJ) DNA during genetic recombination and DNA repair. Endonuclease that resolves HJ intermediates. Cleaves cruciform DNA by making single-stranded nicks across the HJ at symmetrical positions within the homologous arms, yielding a 5'-phosphate and a 3'-hydroxyl group; requires a central core of homology in the junction. The consensus cleavage sequence is 5'-(A/T)TT(C/G)-3'. Cleavage occurs on the 3'-side of the TT dinucleotide at the point of strand exchange. HJ branch migration catalyzed by RuvA-RuvB allows RuvC to scan DNA until it finds its consensus sequence, where it cleaves and resolves the cruciform DNA. The sequence is that of Crossover junction endodeoxyribonuclease RuvC from Chlamydia pneumoniae (Chlamydophila pneumoniae).